Consider the following 136-residue polypeptide: Holo-[acyl-carrier-protein] synthase (136 aa).

Aspartate 8 and glutamate 57 together coordinate Mg(2+).

The protein belongs to the P-Pant transferase superfamily. AcpS family. The cofactor is Mg(2+).

The protein localises to the cytoplasm. It catalyses the reaction apo-[ACP] + CoA = holo-[ACP] + adenosine 3',5'-bisphosphate + H(+). Its function is as follows. Transfers the 4'-phosphopantetheine moiety from coenzyme A to a Ser of acyl-carrier-protein. This is Holo-[acyl-carrier-protein] synthase from Methylorubrum extorquens (strain CM4 / NCIMB 13688) (Methylobacterium extorquens).